Consider the following 539-residue polypeptide: Membrane protein insertase YidC (539 aa).

Residues 6–26 form a helical membrane-spanning segment; that stretch reads NILLIALALVSFLLFQQWNVA. Polar residues predominate over residues 35–44; it reads EQAQSGSTLP. The segment at 35–55 is disordered; it reads EQAQSGSTLPAPSYADDLDPA. The next 4 membrane-spanning stretches (helical) occupy residues 341 to 361, 416 to 436, 454 to 474, and 495 to 515; these read SFIQ…TFIV, LGGC…YWAL, LSAQ…MFLI, and PVMF…YWLV.

This sequence belongs to the OXA1/ALB3/YidC family. Type 1 subfamily. In terms of assembly, interacts with the Sec translocase complex via SecD. Specifically interacts with transmembrane segments of nascent integral membrane proteins during membrane integration.

The protein localises to the cell inner membrane. Its function is as follows. Required for the insertion and/or proper folding and/or complex formation of integral membrane proteins into the membrane. Involved in integration of membrane proteins that insert both dependently and independently of the Sec translocase complex, as well as at least some lipoproteins. Aids folding of multispanning membrane proteins. This Vibrio atlanticus (strain LGP32) (Vibrio splendidus (strain Mel32)) protein is Membrane protein insertase YidC.